Reading from the N-terminus, the 94-residue chain is Small ribosomal subunit protein uS17 (94 aa).

The protein belongs to the universal ribosomal protein uS17 family. In terms of assembly, part of the 30S ribosomal subunit.

Its function is as follows. One of the primary rRNA binding proteins, it binds specifically to the 5'-end of 16S ribosomal RNA. The sequence is that of Small ribosomal subunit protein uS17 from Streptomyces avermitilis (strain ATCC 31267 / DSM 46492 / JCM 5070 / NBRC 14893 / NCIMB 12804 / NRRL 8165 / MA-4680).